A 1662-amino-acid polypeptide reads, in one-letter code: Cortactin-binding protein 2 (1662 aa).

Disordered regions lie at residues 1–23 (MATD…AGAA), 202–235 (KKKT…EFDT), 365–439 (IGVS…LHPG), and 453–477 (GNAN…SPTS). Residues 118–275 (RKMQERMSAQ…EQLKRGSDSK (158 aa)) adopt a coiled-coil conformation. Residues 385–395 (PSTGSTPDPTS) show a composition bias toward low complexity. The span at 404–421 (AAPSTAQTPGITPQNSQA) shows a compositional bias: polar residues. R497 carries the asymmetric dimethylarginine modification. A disordered region spans residues 498-615 (FTGPQAGAPP…SSPQLPPKPS (118 aa)). Polar residues-rich tracts occupy residues 516-529 (DVST…TSVK) and 582-592 (TVASPPSSLPQ). 5 ANK repeats span residues 708–738 (GRPT…DINY), 742–771 (DGHS…QVNA), 775–804 (NGFT…NINH), 808–837 (GGQT…DRSV), and 841–870 (DGWT…PAHG). Residues 871–897 (NSFSEEESESGVFDLDEGEESPEGKSK) are disordered. Over residues 874–891 (SEEESESGVFDLDEGEES) the composition is skewed to acidic residues. One copy of the ANK 6 repeat lies at 911-941 (EGWTAAHIAASKGFKNCLEILCRHGGLETER). The interval 1446 to 1473 (KKKGESGAWRKVNTSPRRKSGRFSLPTW) is disordered. S1523 carries the phosphoserine modification. The disordered stretch occupies residues 1614 to 1662 (VPRSKVTQCSQNTKRSSSSSNTRQIEINNNSKEENWNLHKNEHLEKPNK). Low complexity predominate over residues 1623–1637 (SQNTKRSSSSSNTRQ). Over residues 1644–1662 (SKEENWNLHKNEHLEKPNK) the composition is skewed to basic and acidic residues.

As to quaternary structure, interacts with CTTN/cortactin SH3 domain. Interacts with STRN, STRN4/zinedin and MOB4/phocein; this interactions mediate the association with the STRIPAK core complex and may regulate dendritic spine distribution of the STRIPAK complex in hippocampal neurons. Activation of glutamate receptors weakens the interaction with STRN and STRN4.

Its subcellular location is the cytoplasm. It localises to the cell cortex. It is found in the cell projection. The protein localises to the dendritic spine. Regulates the dendritic spine distribution of CTTN/cortactin in hippocampal neurons, and thus controls dendritic spinogenesis and dendritic spine maintenance. Associates with the striatin-interacting phosphatase and kinase (STRIPAK) core complex to regulate dendritic spine distribution of the STRIPAK complex in hippocampal neurons. This chain is Cortactin-binding protein 2 (CTTNBP2), found in Callithrix jacchus (White-tufted-ear marmoset).